Reading from the N-terminus, the 110-residue chain is UPF0132 membrane protein MJ1443 (110 aa).

A run of 3 helical transmembrane segments spans residues 15–35 (IEGA…YILE), 49–69 (IILF…PYGW), and 70–90 (MLSG…MYKA).

It belongs to the UPF0132 family.

It is found in the cell membrane. The sequence is that of UPF0132 membrane protein MJ1443 from Methanocaldococcus jannaschii (strain ATCC 43067 / DSM 2661 / JAL-1 / JCM 10045 / NBRC 100440) (Methanococcus jannaschii).